We begin with the raw amino-acid sequence, 258 residues long: Ribosomal RNA small subunit methyltransferase J (258 aa).

S-adenosyl-L-methionine is bound by residues 123–124 and D177; that span reads ER. Residues 232-258 form a disordered region; it reads IDGPKPSHSLEGKSSRYDIYPKKALKA. Residues 239 to 252 are compositionally biased toward basic and acidic residues; the sequence is HSLEGKSSRYDIYP.

The protein belongs to the methyltransferase superfamily. RsmJ family.

The protein resides in the cytoplasm. The enzyme catalyses guanosine(1516) in 16S rRNA + S-adenosyl-L-methionine = N(2)-methylguanosine(1516) in 16S rRNA + S-adenosyl-L-homocysteine + H(+). Specifically methylates the guanosine in position 1516 of 16S rRNA. This Pseudomonas putida (strain GB-1) protein is Ribosomal RNA small subunit methyltransferase J.